Here is a 248-residue protein sequence, read N- to C-terminus: Pyridoxine 5'-phosphate synthase (248 aa).

N12 lines the 3-amino-2-oxopropyl phosphate pocket. 14 to 15 (DH) lines the 1-deoxy-D-xylulose 5-phosphate pocket. R23 contacts 3-amino-2-oxopropyl phosphate. The active-site Proton acceptor is H48. Residues R50 and H55 each contribute to the 1-deoxy-D-xylulose 5-phosphate site. The active-site Proton acceptor is E75. 1-deoxy-D-xylulose 5-phosphate is bound at residue T105. H199 acts as the Proton donor in catalysis. Residues G200 and 221-222 (GH) contribute to the 3-amino-2-oxopropyl phosphate site.

It belongs to the PNP synthase family. In terms of assembly, homooctamer; tetramer of dimers.

Its subcellular location is the cytoplasm. The enzyme catalyses 3-amino-2-oxopropyl phosphate + 1-deoxy-D-xylulose 5-phosphate = pyridoxine 5'-phosphate + phosphate + 2 H2O + H(+). It functions in the pathway cofactor biosynthesis; pyridoxine 5'-phosphate biosynthesis; pyridoxine 5'-phosphate from D-erythrose 4-phosphate: step 5/5. In terms of biological role, catalyzes the complicated ring closure reaction between the two acyclic compounds 1-deoxy-D-xylulose-5-phosphate (DXP) and 3-amino-2-oxopropyl phosphate (1-amino-acetone-3-phosphate or AAP) to form pyridoxine 5'-phosphate (PNP) and inorganic phosphate. This is Pyridoxine 5'-phosphate synthase from Jannaschia sp. (strain CCS1).